The primary structure comprises 226 residues: ATP synthase F(0) complex subunit a (226 aa).

The next 6 membrane-spanning stretches (helical) occupy residues 12-32 (PTVL…LLVP), 68-88 (WSLM…LGLF), 97-117 (QLSM…AMGL), 138-158 (IPML…ALAV), 164-184 (ITAG…MLTI), and 189-209 (TLIT…VALI).

This sequence belongs to the ATPase A chain family. Component of the ATP synthase complex composed at least of ATP5F1A/subunit alpha, ATP5F1B/subunit beta, ATP5MC1/subunit c (homooctomer), MT-ATP6/subunit a, MT-ATP8/subunit 8, ATP5ME/subunit e, ATP5MF/subunit f, ATP5MG/subunit g, ATP5MK/subunit k, ATP5MJ/subunit j, ATP5F1C/subunit gamma, ATP5F1D/subunit delta, ATP5F1E/subunit epsilon, ATP5PF/subunit F6, ATP5PB/subunit b, ATP5PD/subunit d, ATP5PO/subunit OSCP. ATP synthase complex consists of a soluble F(1) head domain (subunits alpha(3) and beta(3)) - the catalytic core - and a membrane F(0) domain - the membrane proton channel (subunits c, a, 8, e, f, g, k and j). These two domains are linked by a central stalk (subunits gamma, delta, and epsilon) rotating inside the F1 region and a stationary peripheral stalk (subunits F6, b, d, and OSCP). Interacts with DNAJC30; interaction is direct.

It is found in the mitochondrion inner membrane. It catalyses the reaction H(+)(in) = H(+)(out). In terms of biological role, subunit a, of the mitochondrial membrane ATP synthase complex (F(1)F(0) ATP synthase or Complex V) that produces ATP from ADP in the presence of a proton gradient across the membrane which is generated by electron transport complexes of the respiratory chain. ATP synthase complex consist of a soluble F(1) head domain - the catalytic core - and a membrane F(1) domain - the membrane proton channel. These two domains are linked by a central stalk rotating inside the F(1) region and a stationary peripheral stalk. During catalysis, ATP synthesis in the catalytic domain of F(1) is coupled via a rotary mechanism of the central stalk subunits to proton translocation. With the subunit c (ATP5MC1), forms the proton-conducting channel in the F(0) domain, that contains two crucial half-channels (inlet and outlet) that facilitate proton movement from the mitochondrial intermembrane space (IMS) into the matrix. Protons are taken up via the inlet half-channel and released through the outlet half-channel, following a Grotthuss mechanism. The protein is ATP synthase F(0) complex subunit a of Pongo pygmaeus (Bornean orangutan).